The sequence spans 532 residues: Probable rhamnogalacturonase B (532 aa).

Residues 1–21 form the signal peptide; the sequence is MRINTLSLFSLVSLVPTLALA. Cys42 and Cys68 are oxidised to a cystine. Catalysis depends on Asp219, which acts as the Proton donor. The cysteines at positions 221 and 238 are disulfide-linked. A glycan (N-linked (GlcNAc...) asparagine) is linked at Asn239. His294 is an active-site residue. The N-linked (GlcNAc...) asparagine glycan is linked to Asn321. 2 disulfide bridges follow: Cys344-Cys350 and Cys374-Cys383. Composition is skewed to low complexity over residues 466-475 and 490-499; these read TVAAATSTPA and QPSQQSPGQS. The interval 466 to 532 is disordered; the sequence is TVAAATSTPA…HRHHQRHGHH (67 aa). A compositionally biased stretch (basic residues) spans 521–532; the sequence is AGHRHHQRHGHH.

The protein belongs to the glycosyl hydrolase 28 family.

The protein resides in the secreted. It catalyses the reaction Endohydrolysis of alpha-D-GalA-(1-&gt;2)-alpha-L-Rha glycosidic bond in the rhamnogalacturonan I backbone with initial inversion of anomeric configuration releasing oligosaccharides with beta-D-GalA at the reducing end.. Its function is as follows. Pectinolytic enzymes consist of four classes of enzymes: pectine lyase, polygalacturonase, pectin methylesterase and rhamnogalacturonase. Hydrolyzes alpha-D-galacturonopyranosyl-(1,2)-alpha-L-rhamnopyranosyl linkages in the backbone of the hairy regions of pectins. The protein is Probable rhamnogalacturonase B (rhgB) of Aspergillus oryzae (strain ATCC 42149 / RIB 40) (Yellow koji mold).